The following is a 508-amino-acid chain: Photosystem II CP47 reaction center protein (508 aa).

Helical transmembrane passes span 21–36 (SVHIMHTALVSGWAGS), 101–115 (IVFSGLCFLAAIWHW), 140–156 (GIHLFLAGVACFGFGAF), 203–218 (IAAGTLGILAGLFHLS), 237–252 (VLSSSIAAVFFAAFVV), and 457–472 (TFALLFFFGHIWHGAR).

This sequence belongs to the PsbB/PsbC family. PsbB subfamily. As to quaternary structure, PSII is composed of 1 copy each of membrane proteins PsbA, PsbB, PsbC, PsbD, PsbE, PsbF, PsbH, PsbI, PsbJ, PsbK, PsbL, PsbM, PsbT, PsbX, PsbY, PsbZ, Psb30/Ycf12, at least 3 peripheral proteins of the oxygen-evolving complex and a large number of cofactors. It forms dimeric complexes. The cofactor is Binds multiple chlorophylls. PSII binds additional chlorophylls, carotenoids and specific lipids..

The protein localises to the plastid. Its subcellular location is the chloroplast thylakoid membrane. In terms of biological role, one of the components of the core complex of photosystem II (PSII). It binds chlorophyll and helps catalyze the primary light-induced photochemical processes of PSII. PSII is a light-driven water:plastoquinone oxidoreductase, using light energy to abstract electrons from H(2)O, generating O(2) and a proton gradient subsequently used for ATP formation. The polypeptide is Photosystem II CP47 reaction center protein (Oryza nivara (Indian wild rice)).